Consider the following 116-residue polypeptide: NADH-ubiquinone oxidoreductase chain 3 (116 aa).

3 helical membrane-spanning segments follow: residues 4 to 24, 56 to 76, and 88 to 108; these read IIFLFSITIAVAVVLGLAAHA, FFLVAILFLLFDLEIALLFPL, and LIPISMVFMVILTLGLVFEWI.

The protein belongs to the complex I subunit 3 family.

The protein localises to the mitochondrion membrane. It catalyses the reaction a ubiquinone + NADH + 5 H(+)(in) = a ubiquinol + NAD(+) + 4 H(+)(out). Functionally, core subunit of the mitochondrial membrane respiratory chain NADH dehydrogenase (Complex I) that is believed to belong to the minimal assembly required for catalysis. Complex I functions in the transfer of electrons from NADH to the respiratory chain. The immediate electron acceptor for the enzyme is believed to be ubiquinone. The chain is NADH-ubiquinone oxidoreductase chain 3 (ND3) from Strongylocentrotus purpuratus (Purple sea urchin).